A 137-amino-acid chain; its full sequence is Large-conductance mechanosensitive channel (137 aa).

Helical transmembrane passes span 15 to 35, 38 to 58, and 80 to 100; these read IDLAIGVIIGGAFGGLVNSIV, ILMPIIGFITGGIDFSNMFIQ, and GNFITLLINFLIIAWVLFLFV.

This sequence belongs to the MscL family. As to quaternary structure, homopentamer.

It localises to the cell inner membrane. Functionally, channel that opens in response to stretch forces in the membrane lipid bilayer. May participate in the regulation of osmotic pressure changes within the cell. The polypeptide is Large-conductance mechanosensitive channel (Bartonella quintana (strain Toulouse) (Rochalimaea quintana)).